The following is a 422-amino-acid chain: 26S proteasome non-ATPase regulatory subunit 11 (422 aa).

Residue alanine 2 is modified to N-acetylalanine. Serine 14 and serine 23 each carry phosphoserine. In terms of domain architecture, PCI spans 224–392 (DWKTAYSYFY…GVLIIFDEPP (169 aa)). Lysine 274 participates in a covalent cross-link: Glycyl lysine isopeptide (Lys-Gly) (interchain with G-Cter in SUMO2).

It belongs to the proteasome subunit S9 family. Component of the 19S proteasome regulatory particle complex. The 26S proteasome consists of a 20S core particle (CP) and two 19S regulatory subunits (RP). The regulatory particle is made of a lid composed of 9 subunits including PSMD11, a base containing 6 ATPases and few additional components. Phosphorylated by AMPK.

It localises to the nucleus. It is found in the cytoplasm. The protein localises to the cytosol. In terms of biological role, component of the 26S proteasome, a multiprotein complex involved in the ATP-dependent degradation of ubiquitinated proteins. This complex plays a key role in the maintenance of protein homeostasis by removing misfolded or damaged proteins, which could impair cellular functions, and by removing proteins whose functions are no longer required. Therefore, the proteasome participates in numerous cellular processes, including cell cycle progression, apoptosis, or DNA damage repair. In the complex, PSMD11 is required for proteasome assembly. Plays a key role in increased proteasome activity in embryonic stem cells (ESCs): its high expression in ESCs promotes enhanced assembly of the 26S proteasome, followed by higher proteasome activity. The protein is 26S proteasome non-ATPase regulatory subunit 11 (PSMD11) of Bos taurus (Bovine).